We begin with the raw amino-acid sequence, 599 residues long: Pentatricopeptide repeat-containing protein At3g62470, mitochondrial (599 aa).

A mitochondrion-targeting transit peptide spans 1-99 (MAAAPWLHLS…RGFSSGSSNV (99 aa)). PPR repeat units follow at residues 194–228 (DSRTYNSMMSILAKTRQFETMVSVLEEMGTKGLLT), 230–262 (ETFTIAMKAFAAAKERKKAVGIFELMKKYKFKI), 263–293 (GVETINCLLDSLGRAKLGKEAQVLFDKLKER), 297–331 (NMMTYTVLLNGWCRVRNLIEAARIWNDMIDQGLKP), 332–366 (DIVAHNVMLEGLLRSRKKSDAIKLFHVMKSKGPCP), 367–401 (NVRSYTIMIRDFCKQSSMETAIEYFDDMVDSGLQP), 402–436 (DAAVYTCLITGFGTQKKLDTVYELLKEMQEKGHPP), 437–471 (DGKTYNALIKLMANQKMPEHATRIYNKMIQNEIEP), 472–506 (SIHTFNMIMKSYFMARNYEMGRAVWEEMIKKGICP), and 507–541 (DDNSYTVLIRGLIGEGKSREACRYLEEMLDKGMKT).

It belongs to the PPR family. P subfamily.

Its subcellular location is the mitochondrion. The sequence is that of Pentatricopeptide repeat-containing protein At3g62470, mitochondrial from Arabidopsis thaliana (Mouse-ear cress).